The following is a 338-amino-acid chain: DNA-directed RNA polymerase subunit alpha (338 aa).

Residues 1–226 are alpha N-terminal domain (alpha-NTD); that stretch reads MLIAQRPTLS…ELFGLARELN (226 aa). Residues 240–338 form an alpha C-terminal domain (alpha-CTD) region; it reads DEQLAADLAL…DDAFVEDEQY (99 aa).

Belongs to the RNA polymerase alpha chain family. In terms of assembly, homodimer. The RNAP catalytic core consists of 2 alpha, 1 beta, 1 beta' and 1 omega subunit. When a sigma factor is associated with the core the holoenzyme is formed, which can initiate transcription.

The enzyme catalyses RNA(n) + a ribonucleoside 5'-triphosphate = RNA(n+1) + diphosphate. Its function is as follows. DNA-dependent RNA polymerase catalyzes the transcription of DNA into RNA using the four ribonucleoside triphosphates as substrates. This chain is DNA-directed RNA polymerase subunit alpha, found in Nocardioides sp. (strain ATCC BAA-499 / JS614).